A 158-amino-acid chain; its full sequence is Rhombotin-2 (158 aa).

LIM zinc-binding domains lie at 30–89 (CGGC…RLFG) and 94–153 (CASC…EWTK).

Interacts via its LIM domains with ELF2 and LDB1. Also interacts with basic helix-loop-helix protein TAL1/SCL and can assemble in a complex with LMO2 and TAL1/SCL. Interacts with BEX2 and KDM5A.

It localises to the nucleus. Functionally, acts with TAL1/SCL to regulate red blood cell development. Also acts with LDB1 to maintain erythroid precursors in an immature state. This chain is Rhombotin-2 (LMO2), found in Homo sapiens (Human).